The chain runs to 406 residues: Inner kinetochore subunit OKP1 (406 aa).

2 disordered regions span residues 1-37 and 59-122; these read MAADRDNFLQNIENDSINNGQAMDLSPNRSSSESDSS and TQSK…TSGE. Positions 8–21 are enriched in polar residues; that stretch reads FLQNIENDSINNGQ. A compositionally biased stretch (low complexity) spans 26-37; the sequence is SPNRSSSESDSS. Positions 69 to 78 are enriched in acidic residues; the sequence is NSDDAEEGEI. The residue at position 70 (Ser-70) is a Phosphoserine. 2 stretches are compositionally biased toward basic and acidic residues: residues 79–89 and 97–106; these read EERTNKEEGQY and LRFEVGKEST. The segment covering 107-122 has biased composition (polar residues); sequence GKLQSHLSDGSATSGE. Residues 239–285 adopt a coiled-coil conformation; it reads SKRQFIQNRYSQELQNNERLEAILSREQNLLEETRKLCMNLKTNNKK. Positions 317–340 are CTF19-MCM21 binding motif; that stretch reads MHPDGPVTFRNDSHELNLMLNDPI. The tract at residues 353 to 400 is interaction with NKP1-NKP2; that stretch reads VLSLLPSLKEYTKKSKELKETMGQMISDSHEEEIKEVFVPHHESHQDK. The interval 379 to 406 is disordered; the sequence is SDSHEEEIKEVFVPHHESHQDKTEEDIH. The segment covering 380–406 has biased composition (basic and acidic residues); sequence DSHEEEIKEVFVPHHESHQDKTEEDIH.

The protein belongs to the CENP-Q/OKP1 family. As to quaternary structure, component of the heterotetrameric kinetochore subcomplex COMA, which consists of AME1, CTF19, MCM21 and OKP1. The COMA subcomplex is part of a larger constitutive centromere-associated network (CCAN) (also known as central kinetochore CTF19 complex in yeast), which is composed of at least AME1, CHL4, CNN1, CTF3, CTF19, IML3, MCM16, MCM21, MCM22, MHF1, MHF2, MIF2, NKP1, NKP2, OKP1 and WIP1. COMA binds the centromeric nucleosome-binding protein MIF2, and to the outer kinetochore MIND subcomplex. OKP1 interacts directly with AME1, with an NKP1-NKP2 dimer, and with CTF19-MCM21.

The protein localises to the nucleus. It is found in the chromosome. The protein resides in the centromere. It localises to the kinetochore. Functionally, component of the kinetochore, a multiprotein complex that assembles on centromeric DNA and attaches chromosomes to spindle microtubules, mediating chromosome segregation and sister chromatid segregation during meiosis and mitosis. Component of the inner kinetochore COMA complex, which connects centromere-associated proteins and the outer kinetochore. COMA interacts with other inner kinetochore proteins to form the inner kinetochore constitutive centromere-associated network (CCAN), which serves as a structural platform for outer kinetochore assembly. The protein is Inner kinetochore subunit OKP1 of Saccharomyces cerevisiae (strain ATCC 204508 / S288c) (Baker's yeast).